The sequence spans 225 residues: Uracil-DNA glycosylase (225 aa).

Residue aspartate 65 is the Proton acceptor of the active site.

The protein belongs to the uracil-DNA glycosylase (UDG) superfamily. UNG family.

It localises to the cytoplasm. The enzyme catalyses Hydrolyzes single-stranded DNA or mismatched double-stranded DNA and polynucleotides, releasing free uracil.. In terms of biological role, excises uracil residues from the DNA which can arise as a result of misincorporation of dUMP residues by DNA polymerase or due to deamination of cytosine. This Bacillus anthracis (strain A0248) protein is Uracil-DNA glycosylase.